The primary structure comprises 231 residues: Lipoprotein-releasing system ATP-binding protein LolD 2 (231 aa).

Positions 6-230 (VEARSLSKSF…DGRLVGQDPA (225 aa)) constitute an ABC transporter domain. ATP is bound at residue 42 to 49 (GPSGSGKS).

This sequence belongs to the ABC transporter superfamily. Lipoprotein translocase (TC 3.A.1.125) family. As to quaternary structure, the complex is composed of two ATP-binding proteins (LolD) and two transmembrane proteins (LolC and LolE).

Its subcellular location is the cell inner membrane. Part of the ABC transporter complex LolCDE involved in the translocation of mature outer membrane-directed lipoproteins, from the inner membrane to the periplasmic chaperone, LolA. Responsible for the formation of the LolA-lipoprotein complex in an ATP-dependent manner. The protein is Lipoprotein-releasing system ATP-binding protein LolD 2 of Rhodospirillum rubrum (strain ATCC 11170 / ATH 1.1.1 / DSM 467 / LMG 4362 / NCIMB 8255 / S1).